The sequence spans 675 residues: Putative exonuclease GOR (675 aa).

Residues 66-79 (VAKEAAPEASRHLG) show a composition bias toward basic and acidic residues. Disordered regions lie at residues 66–90 (VAKE…APEG) and 225–263 (AKRT…TATT). The interval 358–483 (MPGLSRAALY…VRDGRKESLD (126 aa)) is GOR1-125 epitope.

It belongs to the REXO1/REXO3 family.

It is found in the cytoplasm. The protein resides in the nucleus. The chain is Putative exonuclease GOR (REXO1L1P) from Homo sapiens (Human).